Here is a 1481-residue protein sequence, read N- to C-terminus: DNA-directed RNA polymerase subunit beta'' (1481 aa).

Zn(2+) contacts are provided by Cys217, Cys291, Cys298, and Cys301.

Belongs to the RNA polymerase beta' chain family. RpoC2 subfamily. In terms of assembly, in plastids the minimal PEP RNA polymerase catalytic core is composed of four subunits: alpha, beta, beta', and beta''. When a (nuclear-encoded) sigma factor is associated with the core the holoenzyme is formed, which can initiate transcription. Requires Zn(2+) as cofactor.

It localises to the plastid. Its subcellular location is the chloroplast. It catalyses the reaction RNA(n) + a ribonucleoside 5'-triphosphate = RNA(n+1) + diphosphate. Functionally, DNA-dependent RNA polymerase catalyzes the transcription of DNA into RNA using the four ribonucleoside triphosphates as substrates. The chain is DNA-directed RNA polymerase subunit beta'' from Trieres chinensis (Marine centric diatom).